The primary structure comprises 196 residues: ATP-dependent Clp protease proteolytic subunit (196 aa).

The active-site Nucleophile is serine 97. The active site involves histidine 122.

The protein belongs to the peptidase S14 family. As to quaternary structure, fourteen ClpP subunits assemble into 2 heptameric rings which stack back to back to give a disk-like structure with a central cavity, resembling the structure of eukaryotic proteasomes.

Its subcellular location is the cytoplasm. It catalyses the reaction Hydrolysis of proteins to small peptides in the presence of ATP and magnesium. alpha-casein is the usual test substrate. In the absence of ATP, only oligopeptides shorter than five residues are hydrolyzed (such as succinyl-Leu-Tyr-|-NHMec, and Leu-Tyr-Leu-|-Tyr-Trp, in which cleavage of the -Tyr-|-Leu- and -Tyr-|-Trp bonds also occurs).. Its function is as follows. Cleaves peptides in various proteins in a process that requires ATP hydrolysis. Has a chymotrypsin-like activity. Plays a major role in the degradation of misfolded proteins. The sequence is that of ATP-dependent Clp protease proteolytic subunit from Lacticaseibacillus paracasei (strain ATCC 334 / BCRC 17002 / CCUG 31169 / CIP 107868 / KCTC 3260 / NRRL B-441) (Lactobacillus paracasei).